The following is a 454-amino-acid chain: Adenosylmethionine-8-amino-7-oxononanoate aminotransferase (454 aa).

119–120 (GA) serves as a coordination point for pyridoxal 5'-phosphate. Tyr-152 serves as a coordination point for substrate. Position 257 (Asp-257) interacts with pyridoxal 5'-phosphate. Residues Lys-286, Gly-321, and Arg-416 each contribute to the substrate site. Lys-286 carries the N6-(pyridoxal phosphate)lysine modification.

The protein belongs to the class-III pyridoxal-phosphate-dependent aminotransferase family. BioA subfamily. Homodimer. Requires pyridoxal 5'-phosphate as cofactor.

Its subcellular location is the cytoplasm. It carries out the reaction (8S)-8-amino-7-oxononanoate + S-adenosyl-L-methionine = S-adenosyl-4-methylsulfanyl-2-oxobutanoate + (7R,8S)-7,8-diammoniononanoate. It participates in cofactor biosynthesis; biotin biosynthesis; 7,8-diaminononanoate from 8-amino-7-oxononanoate (SAM route): step 1/1. Its function is as follows. Catalyzes the transfer of the alpha-amino group from S-adenosyl-L-methionine (SAM) to 7-keto-8-aminopelargonic acid (KAPA) to form 7,8-diaminopelargonic acid (DAPA). It is the only aminotransferase known to utilize SAM as an amino donor. The protein is Adenosylmethionine-8-amino-7-oxononanoate aminotransferase of Anoxybacillus flavithermus (strain DSM 21510 / WK1).